The following is a 488-amino-acid chain: MDSNFLWPMLAMFLGSLVVMFGFLKKINEWYYVGRLGEKKNSLPPGEMGWPLLGNMLSLIKAFRSSDPDSFIHCLVDRYGRTGVYKSHLFWSPSIVVCTPETCKHVLMDNEKFGRGNPESTKELLGKQTVSLSTEEHKRLRKLTTNPFRGDKALTMYVGYIEDIVIDMLDELGSINKPVVFLFEMRKLAFKVIGHIVFGTTSDHLLELMEKYYTDLLLGLRSPAINIPGFAFHGALKARKLLVKLLEEVLEERKKRSGIEQKKGQKGMIDLLLEAEDENGKKLEDVHIIDLLIINLLAGHESSAHASMWAVLYLNQHPEMLQKAKQEQEEIIKRRPSTQKGLTLEEIKQMDYLAKVIDETMRRSSLFIPIFREAKVDANIQGYTVPKGWQVLVWTRGVHMDPEVYTNPKEFDPSRWDNHTTKPGSYIPFGGGPWICPGADLTKLEIYIFLHYFLLNYKLELQNPECPVAYLPVPRPSDNCLAKVIRVG.

A helical transmembrane segment spans residues 4 to 24 (NFLWPMLAMFLGSLVVMFGFL). Cys-436 is a heme binding site.

It belongs to the cytochrome P450 family. It depends on heme as a cofactor. As to expression, accumulates in mature fruits and in juice vesicles.

It is found in the membrane. It catalyses the reaction melianol + reduced [NADPH--hemoprotein reductase] + O2 = 7,8-epoxymelianol + oxidized [NADPH--hemoprotein reductase] + H2O + H(+). Its pathway is secondary metabolite biosynthesis; terpenoid biosynthesis. Its function is as follows. Monooxygenase involved in the biosynthesis of limonoids triterpene natural products such as limonin, a compound with insecticidal activity responsible for the bitter taste in citrus. Catalyzes the epoxidation of melianol to produce 7,8-epoxymelianol. The chain is 7,8-epoxymelianol synthase CYP88A51 from Citrus sinensis (Sweet orange).